The sequence spans 67 residues: Small ribosomal subunit protein eS17 (67 aa).

It belongs to the eukaryotic ribosomal protein eS17 family.

The polypeptide is Small ribosomal subunit protein eS17 (Thermococcus sibiricus (strain DSM 12597 / MM 739)).